A 96-amino-acid chain; its full sequence is Integration host factor subunit beta (96 aa).

Positions 59 to 78 (RVGRNPKTGETVSLPGKYVP) are disordered.

The protein belongs to the bacterial histone-like protein family. As to quaternary structure, heterodimer of an alpha and a beta chain.

Functionally, this protein is one of the two subunits of integration host factor, a specific DNA-binding protein that functions in genetic recombination as well as in transcriptional and translational control. In Thioalkalivibrio sulfidiphilus (strain HL-EbGR7), this protein is Integration host factor subunit beta.